A 449-amino-acid chain; its full sequence is Glycoprotein endo-alpha-1,2-mannosidase (449 aa).

The Cytoplasmic segment spans residues 1–8; sequence MIRFRRRT. Residues 9–29 traverse the membrane as a helical; Signal-anchor for type II membrane protein segment; sequence CITLSIFIFLVCLIMAGLKHL. Residues 30–449 are Lumenal-facing; the sequence is RPENAAFGSP…YMKEKEHWLV (420 aa). The interval 59–449 is catalytic; sequence DSENHLKGNT…YMKEKEHWLV (391 aa).

It belongs to the glycosyl hydrolase 99 family.

It is found in the golgi apparatus membrane. It carries out the reaction N-{alpha-Glc-(1-&gt;3)-alpha-Man-(1-&gt;2)-alpha-Man-(1-&gt;2)-alpha-Man-(1-&gt;3)-[alpha-Man-(1-&gt;2)-alpha-Man-(1-&gt;3)-[alpha-Man-(1-&gt;2)-alpha-Man-(1-&gt;6)]-alpha-Man-(1-&gt;6)]-beta-Man-(1-&gt;4)-beta-GlcNAc-(1-&gt;4)-beta-GlcNAc}-L-asparaginyl-[protein] + H2O = alpha-D-glucosyl-(1-&gt;3)-D-mannopyranose + N(4)-{alpha-D-Man-(1-&gt;2)-alpha-D-Man-(1-&gt;3)-[alpha-D-Man-(1-&gt;2)-alpha-D-Man-(1-&gt;3)-[alpha-D-Man-(1-&gt;2)-alpha-D-Man-(1-&gt;6)]-alpha-D-Man-(1-&gt;6)]-beta-D-Man-(1-&gt;4)-beta-D-GlaNAc-(1-&gt;4)-beta-D-GlcNAc}-L-asparaginyl-[protein] (N-glucan mannose isomer 8A1,2,3B1,2). This Xenopus laevis (African clawed frog) protein is Glycoprotein endo-alpha-1,2-mannosidase (manea).